The primary structure comprises 659 residues: Pollen receptor-like kinase 6 (659 aa).

An N-terminal signal peptide occupies residues 1-26; that stretch reads MAAAVLNPGFFLLILLLSFSISPSLQ. Topologically, residues 27–266 are extracellular; that stretch reads YVSESEPLVR…SVPETSNKAA (240 aa). The cysteines at positions 58 and 67 are disulfide-linked. 5 LRR repeats span residues 95–118, 120–142, 143–167, 168–190, and 192–214; these read LPNLKTIRLDNNLLSGPLPHFFKL, GLKSLMLSNNSFSGEIRDDFFKD, MSKLKRLFLDHNKFEGSIPSSITQL, PQLEELHMQSNNLTGEIPPEFGS, and KNLKVLDLSTNSLDGIVPQSIAD. N-linked (GlcNAc...) asparagine glycosylation is present at Asn-128. N-linked (GlcNAc...) asparagine glycosylation is present at Asn-179. A glycan (N-linked (GlcNAc...) asparagine) is linked at Asn-221. The segment at 226 to 242 is LURE peptides binding; the sequence is EYLCGPVVDVGCENIEL. Cysteines 229 and 237 form a disulfide. The segment at 241–260 is disordered; that stretch reads ELNDPQEGQPPSKPSSSVPE. A helical membrane pass occupies residues 267 to 287; that stretch reads INAIMVSISLLLLFFIIVGVI. The Cytoplasmic segment spans residues 288–659; sequence KRRNKKKNPD…AVRRIEQVKT (372 aa). Positions 312–354 are disordered; sequence VRISESSSTTAKRSTDSSRKRGGHSDDGSTKKGVSNIGKGGNG. The span at 324-341 shows a compositional bias: basic and acidic residues; that stretch reads RSTDSSRKRGGHSDDGST. A Protein kinase domain is found at 384-659; the sequence is KAAAEVLGNG…AVRRIEQVKT (276 aa). Residues 390–398 and Lys-412 contribute to the ATP site; that span reads LGNGSLGSA. Ser-464 is modified (phosphoserine). Thr-484 and Thr-557 each carry phosphothreonine. A Phosphoserine modification is found at Ser-561.

It belongs to the protein kinase superfamily. Ser/Thr protein kinase family. As to quaternary structure, interacts with ROPGEF8, ROPGEF9, ROPGEF12, ROPGEF13, PRK3, LIP1 and LIP2. Binds to LURE peptides via its LRR repeats; interacts with LURE1.1, LURE1.2, LURE1.3 and LURE1.4. Expressed specifically in the pollen tube, predominantly at the tip.

The protein resides in the cell membrane. The protein localises to the cytoplasmic granule. In terms of biological role, key receptor for sensing species-specific attractants in cooperation with other pollen receptor-like kinases. Essential for pollen tube reorientation toward attractant peptides. The sequence is that of Pollen receptor-like kinase 6 from Arabidopsis thaliana (Mouse-ear cress).